The chain runs to 742 residues: Dynein axonemal intermediate chain 4 (742 aa).

4 WD repeats span residues 462–502 (HCEC…DFPV), 511–559 (KHTS…DCND), 631–671 (GHKG…PILT), and 674–713 (NTTN…IDPV).

As to quaternary structure, part of the multisubunit axonemal dynein complex formed at least of two heavy chains and a number of intermediate and light chains. Associated with axonemal dynein subunits such as, DNAH2, DNAI3, and DYNLT1.

It localises to the cytoplasm. Its subcellular location is the cytoskeleton. The protein localises to the flagellum axoneme. The protein resides in the cilium axoneme. It is found in the dynein axonemal particle. In terms of biological role, plays a critical role in the assembly of axonemal dynein complex, thereby playing a role in ciliary motility. This Xenopus laevis (African clawed frog) protein is Dynein axonemal intermediate chain 4.